We begin with the raw amino-acid sequence, 221 residues long: Lipoprotein-releasing system ATP-binding protein LolD (221 aa).

The region spanning 6–220 (LILKNISKHY…YKLKHGLLNI (215 aa)) is the ABC transporter domain. 42–49 (GSSGSGKS) is an ATP binding site.

It belongs to the ABC transporter superfamily. Lipoprotein translocase (TC 3.A.1.125) family. As to quaternary structure, the complex is composed of two ATP-binding proteins (LolD) and two transmembrane proteins (LolC and LolE).

It localises to the cell inner membrane. Its function is as follows. Part of the ABC transporter complex LolCDE involved in the translocation of mature outer membrane-directed lipoproteins, from the inner membrane to the periplasmic chaperone, LolA. Responsible for the formation of the LolA-lipoprotein complex in an ATP-dependent manner. This chain is Lipoprotein-releasing system ATP-binding protein LolD, found in Rickettsia felis (strain ATCC VR-1525 / URRWXCal2) (Rickettsia azadi).